Here is a 326-residue protein sequence, read N- to C-terminus: 3-oxopimeloyl-[acyl-carrier-protein] synthase (326 aa).

Residues cysteine 115 and histidine 253 contribute to the active site. An ACP-binding region spans residues 254–258 (QANIR). The active site involves asparagine 283.

Belongs to the thiolase-like superfamily. BioZ family.

It catalyses the reaction malonyl-[ACP] + an acyl-CoA + H(+) = a 3-oxoacyl-[ACP] + CO2 + CoA. The catalysed reaction is glutaryl-CoA + malonyl-[ACP] + H(+) = 3-oxo-6-carboxyhexanoyl-[ACP] + CO2 + CoA. It participates in cofactor biosynthesis; biotin biosynthesis. In terms of biological role, involved in the formation of the biotin precursor pimeloyl-ACP. Catalyzes the condensation of glutaryl-CoA, an intermediate in lysine degradation, with malonyl-ACP to produce 3-oxopimeloyl-ACP. The protein is 3-oxopimeloyl-[acyl-carrier-protein] synthase of Brucella abortus (strain 2308).